The chain runs to 182 residues: Adenylate kinase (182 aa).

Position 12–17 (12–17 (GAGKGT)) interacts with ATP. Residues 32–61 (STGELLRKEIEMNTALGIQVKDIMNRGELV) are NMP. Residues Thr33, Arg38, 59 to 61 (ELV), 85 to 88 (GYPR), and Gln92 contribute to the AMP site. The interval 126 to 132 (LRGRKDD) is LID. Residue Arg127 participates in ATP binding. AMP-binding residues include Arg129 and Arg140. Residue Arg168 coordinates ATP.

This sequence belongs to the adenylate kinase family. As to quaternary structure, monomer.

It is found in the cytoplasm. The catalysed reaction is AMP + ATP = 2 ADP. It functions in the pathway purine metabolism; AMP biosynthesis via salvage pathway; AMP from ADP: step 1/1. Its function is as follows. Catalyzes the reversible transfer of the terminal phosphate group between ATP and AMP. Plays an important role in cellular energy homeostasis and in adenine nucleotide metabolism. This Prochlorococcus marinus (strain MIT 9301) protein is Adenylate kinase.